The primary structure comprises 253 residues: uncharacterized protein (253 aa).

The tract at residues 211–235 is disordered; sequence DEPEPAQPTLTVPSAQPVSNRRGKP. Residues 218-229 are compositionally biased toward polar residues; that stretch reads PTLTVPSAQPVS.

This is an uncharacterized protein from Mycobacterium tuberculosis (strain CDC 1551 / Oshkosh).